A 476-amino-acid polypeptide reads, in one-letter code: Exodeoxyribonuclease 7 large subunit (476 aa).

Belongs to the XseA family. In terms of assembly, heterooligomer composed of large and small subunits.

The protein localises to the cytoplasm. It catalyses the reaction Exonucleolytic cleavage in either 5'- to 3'- or 3'- to 5'-direction to yield nucleoside 5'-phosphates.. Functionally, bidirectionally degrades single-stranded DNA into large acid-insoluble oligonucleotides, which are then degraded further into small acid-soluble oligonucleotides. The protein is Exodeoxyribonuclease 7 large subunit of Bartonella tribocorum (strain CIP 105476 / IBS 506).